The following is a 63-amino-acid chain: High-potential iron-sulfur protein (63 aa).

Residues C23, C26, C41, and C56 each coordinate [4Fe-4S] cluster.

Belongs to the high-potential iron-sulfur protein (HiPIP) family. In terms of assembly, homodimer.

In terms of biological role, specific class of high-redox-potential 4Fe-4S ferredoxins. Functions in anaerobic electron transport in most purple and in some other photosynthetic bacteria and in at least one genus (Paracoccus) of halophilic, denitrifying bacteria. In Rhodocyclus tenuis (Rhodospirillum tenue), this protein is High-potential iron-sulfur protein (hip).